A 137-amino-acid polypeptide reads, in one-letter code: DNA-directed RNA polymerase I subunit RPA14 (137 aa).

The tract at residues 100–137 (PPAQDFSAAPIQVSTTEKKETSIGVSATGGKKTTFADE) is disordered. S121 bears the Phosphoserine mark.

As to quaternary structure, component of the RNA polymerase I (Pol I) complex consisting of 14 subunits: RPA135, RPA190, RPC40, RPA14, RPB5, RPO26, RPA43, RPB8, RPA12, RPB10, RPC19, RPC10, RPA49 and RPA34. The complex is composed of a horseshoe-shaped core containing ten subunits (RPA135, RPA190, RPB5, RPO26, RPB8, RPB10, RPC10, RPA12, RPC19 and RPC40) where RPA135 and RPA190 form the DNA-binding cleft. Outside of the core, RPA14 and RPA43 form the stalk that mediates interactions with transcription initiation factors and newly synthesized RNA. The N-terminus is blocked.

Its subcellular location is the nucleus. It is found in the nucleolus. Functionally, DNA-dependent RNA polymerases catalyze the transcription of DNA into RNA using the four ribonucleoside triphosphates as substrates. Component of RNA polymerase I (Pol I) which synthesizes ribosomal RNA precursors. RPA14 seems to play a role in the stability of subunits RPO26 and RPA43. In vitro, the RPA14-RPA43 subcomplex binds single-stranded RNA. The polypeptide is DNA-directed RNA polymerase I subunit RPA14 (RPA14) (Saccharomyces cerevisiae (strain ATCC 204508 / S288c) (Baker's yeast)).